The following is a 408-amino-acid chain: F-box A protein 155 (408 aa).

The segment at 1–22 is disordered; that stretch reads MSDRGSDQSSSSSDSAQHIPPK.

This sequence belongs to the FTH family.

The protein is F-box A protein 155 (fbxa-155) of Caenorhabditis elegans.